The chain runs to 522 residues: Tetratricopeptide repeat protein 39C (522 aa).

TPR repeat units lie at residues 254–287 (SLFMFFKGRIQRLECQINSALTSFHTALELAVDQ), 292–325 (HVCLYEIGWCSMIELNFKDAFDSFERLKNESRWS), and 424–457 (GLKHLLLGAIHKCLGNSQDAVQFFQRAAKDESCR).

It belongs to the TTC39 family.

In Rattus norvegicus (Rat), this protein is Tetratricopeptide repeat protein 39C (Ttc39c).